A 343-amino-acid polypeptide reads, in one-letter code: ATP phosphoribosyltransferase regulatory subunit (343 aa).

The disordered stretch occupies residues 324–343 (RANGRAKRPARPRRSPPRPR). Basic residues predominate over residues 327-343 (GRAKRPARPRRSPPRPR).

It belongs to the class-II aminoacyl-tRNA synthetase family. HisZ subfamily. In terms of assembly, heteromultimer composed of HisG and HisZ subunits.

It localises to the cytoplasm. It functions in the pathway amino-acid biosynthesis; L-histidine biosynthesis; L-histidine from 5-phospho-alpha-D-ribose 1-diphosphate: step 1/9. Its function is as follows. Required for the first step of histidine biosynthesis. May allow the feedback regulation of ATP phosphoribosyltransferase activity by histidine. In Anaeromyxobacter sp. (strain Fw109-5), this protein is ATP phosphoribosyltransferase regulatory subunit.